The primary structure comprises 141 residues: Ribosome-binding factor A (141 aa).

Belongs to the RbfA family. As to quaternary structure, monomer. Binds 30S ribosomal subunits, but not 50S ribosomal subunits or 70S ribosomes.

The protein resides in the cytoplasm. One of several proteins that assist in the late maturation steps of the functional core of the 30S ribosomal subunit. Associates with free 30S ribosomal subunits (but not with 30S subunits that are part of 70S ribosomes or polysomes). Required for efficient processing of 16S rRNA. May interact with the 5'-terminal helix region of 16S rRNA. The protein is Ribosome-binding factor A of Afipia carboxidovorans (strain ATCC 49405 / DSM 1227 / KCTC 32145 / OM5) (Oligotropha carboxidovorans).